The sequence spans 96 residues: Small ribosomal subunit protein bS6 (96 aa).

This sequence belongs to the bacterial ribosomal protein bS6 family.

Binds together with bS18 to 16S ribosomal RNA. In Bacillus mycoides (strain KBAB4) (Bacillus weihenstephanensis), this protein is Small ribosomal subunit protein bS6.